A 241-amino-acid polypeptide reads, in one-letter code: Large ribosomal subunit protein uL30 (241 aa).

Residues 1-25 form a disordered region; sequence MASTLKPETLVKKSKAQQKTAEERA.

This sequence belongs to the universal ribosomal protein uL30 family.

In Debaryomyces hansenii (strain ATCC 36239 / CBS 767 / BCRC 21394 / JCM 1990 / NBRC 0083 / IGC 2968) (Yeast), this protein is Large ribosomal subunit protein uL30 (RPL7).